The primary structure comprises 140 residues: MAASWGQVLALVLVAALWGGTQPLLKRASSGLEQVRERTWAWQLLQEIKALFGNTEYLMPFLLNQSGSLLYYLTLASTDLTLAVPICNSLAIVFTLIVGKVLGEDIGGKEAVAGMVLTITGITVCITSSVSKTQGQPSHS.

Helical transmembrane passes span 1-21, 82-102, and 111-131; these read MAAS…WGGT, LAVP…GKVL, and AVAG…SSVS.

This sequence belongs to the TMEM234 family.

The protein resides in the membrane. This Mus musculus (Mouse) protein is Transmembrane protein 234 (Tmem234).